The chain runs to 528 residues: Transcriptional activator protein UGA3 (528 aa).

Residues 17–44 (CITCKIRKKRCSEDKPVCRDCRRLSFPC) constitute a DNA-binding region (zn(2)-C6 fungal-type). Positions 55-62 (SLKKIKAD) match the Nuclear localization signal motif.

UGA3 proteins associate in oligomers, at least in the presence of inducer.

The protein localises to the nucleus. Its function is as follows. GABA-dependent positive regulation of genes required for catabolism of GABA (UGA4, UGA1, and UGA2). The sequence is that of Transcriptional activator protein UGA3 (UGA3) from Saccharomyces cerevisiae (strain ATCC 204508 / S288c) (Baker's yeast).